The chain runs to 459 residues: NADP-specific glutamate dehydrogenase (459 aa).

K116 is a catalytic residue.

The protein belongs to the Glu/Leu/Phe/Val dehydrogenases family. In terms of assembly, homohexamer.

The catalysed reaction is L-glutamate + NADP(+) + H2O = 2-oxoglutarate + NH4(+) + NADPH + H(+). The sequence is that of NADP-specific glutamate dehydrogenase (GDHA) from Schwanniomyces occidentalis (Yeast).